A 284-amino-acid polypeptide reads, in one-letter code: MEMO1 family protein STK_20620 (284 aa).

It belongs to the MEMO1 family.

The chain is MEMO1 family protein STK_20620 from Sulfurisphaera tokodaii (strain DSM 16993 / JCM 10545 / NBRC 100140 / 7) (Sulfolobus tokodaii).